The sequence spans 187 residues: Intermembrane transport lipoprotein PqiC (187 aa).

An N-terminal signal peptide occupies residues 1–15; that stretch reads MKKWLVTIAALWLAG. Cys-16 is lipidated: N-palmitoyl cysteine. Residue Cys-16 is the site of S-diacylglycerol cysteine attachment.

May form a complex composed of PqiA, PqiB and PqiC. Interacts with PqiB.

Its subcellular location is the cell outer membrane. In terms of biological role, component of a transport pathway that contributes to membrane integrity. The chain is Intermembrane transport lipoprotein PqiC from Escherichia coli (strain K12).